We begin with the raw amino-acid sequence, 502 residues long: Histidine--tRNA ligase (502 aa).

The protein belongs to the class-II aminoacyl-tRNA synthetase family. Homodimer.

Its subcellular location is the cytoplasm. The enzyme catalyses tRNA(His) + L-histidine + ATP = L-histidyl-tRNA(His) + AMP + diphosphate + H(+). The sequence is that of Histidine--tRNA ligase from Brucella abortus (strain S19).